A 149-amino-acid chain; its full sequence is Calmodulin-3 (149 aa).

An N-acetylalanine modification is found at alanine 2. EF-hand domains are found at residues 8–43, 44–79, 81–116, and 117–149; these read DQIA…LGQN, PTEA…KMKD, DSEE…LGEK, and LTDE…MMAK. The Ca(2+) site is built by aspartate 21, aspartate 23, aspartate 25, cysteine 27, glutamate 32, aspartate 57, aspartate 59, asparagine 61, threonine 63, glutamate 68, aspartate 94, aspartate 96, asparagine 98, and glutamate 105. N6,N6,N6-trimethyllysine is present on lysine 116. Aspartate 130, aspartate 132, aspartate 134, glutamine 136, and glutamate 141 together coordinate Ca(2+).

It belongs to the calmodulin family.

Functionally, calmodulin mediates the control of a large number of enzymes, ion channels and other proteins by Ca(2+). Among the enzymes to be stimulated by the calmodulin-Ca(2+) complex are a number of protein kinases and phosphatases. The sequence is that of Calmodulin-3 (CAM3) from Oryza sativa subsp. indica (Rice).